The chain runs to 365 residues: UDP-N-acetylglucosamine--N-acetylmuramyl-(pentapeptide) pyrophosphoryl-undecaprenol N-acetylglucosamine transferase (365 aa).

UDP-N-acetyl-alpha-D-glucosamine contacts are provided by residues 17–19 (TGG), asparagine 129, arginine 167, serine 194, isoleucine 250, 269–274 (ALTVSE), and glutamine 295.

The protein belongs to the glycosyltransferase 28 family. MurG subfamily.

The protein resides in the cell inner membrane. The enzyme catalyses di-trans,octa-cis-undecaprenyl diphospho-N-acetyl-alpha-D-muramoyl-L-alanyl-D-glutamyl-meso-2,6-diaminopimeloyl-D-alanyl-D-alanine + UDP-N-acetyl-alpha-D-glucosamine = di-trans,octa-cis-undecaprenyl diphospho-[N-acetyl-alpha-D-glucosaminyl-(1-&gt;4)]-N-acetyl-alpha-D-muramoyl-L-alanyl-D-glutamyl-meso-2,6-diaminopimeloyl-D-alanyl-D-alanine + UDP + H(+). It functions in the pathway cell wall biogenesis; peptidoglycan biosynthesis. Functionally, cell wall formation. Catalyzes the transfer of a GlcNAc subunit on undecaprenyl-pyrophosphoryl-MurNAc-pentapeptide (lipid intermediate I) to form undecaprenyl-pyrophosphoryl-MurNAc-(pentapeptide)GlcNAc (lipid intermediate II). The sequence is that of UDP-N-acetylglucosamine--N-acetylmuramyl-(pentapeptide) pyrophosphoryl-undecaprenol N-acetylglucosamine transferase from Shewanella woodyi (strain ATCC 51908 / MS32).